Consider the following 342-residue polypeptide: Gibberellin cluster GA4 desaturase (342 aa).

Residues 127–183 (PELAPPYPMPGKSSSGSKEREAIPANELPTTRAKGFQKGEEEGPVRKPHKDWGPSGA) are disordered.

This sequence belongs to the asaB hydroxylase/desaturase family.

It functions in the pathway plant hormone biosynthesis; gibberellin biosynthesis. In terms of biological role, GA4 desaturase; part of the gene cluster that mediates the biosynthesis of gibberellins (GAs), diterpenoids that may provide a selective advantage during infection of the preferred host plant, rice. Gibberellins (GAs) are diterpenoids and are synthesized via the mevalonate pathway. Biosynthesis of the major metabolite GA3 (gibberellic acid) from geranylgeranyl diphosphate (GGPP) requires 13 steps. The GGPP produced by the geranylgeranyl diphosphate synthase GGS2 is converted to ent-kaurene via ent-copalyldiphosphate in a two-step cyclization reaction performed by the bifunctional ent-copalyl diphosphate synthase/ent-kaurene synthase enzyme (CPS/KS). Ent-Kaurene is metabolized to GAs by a series of oxidation reactions catalyzed by cytochrome P450 monooxygenases. Cytochrome P450 monooxygenase P450-4 is an ent-kaurene oxidase that catalyzes the three oxidation steps between ent-kaurene and ent-kaurenoic acid. The highly multifunctional cytochrome P450 monooxygenase P450-1 then catalyzes four steps involving oxidation at two carbon atoms, in the main pathway from ent-kaurenoic acid to GA14 via GA12-aldehyde as well as producing kaurenolides and fujenoic acids as by-products. The cytochrome P450 monooxygenase P450-2 then converts GA14 to GA4 by removal of C-20. GA4 is further converted to GA7 by the GA4 desaturase DES via 1,2-desaturation before cytochrome P450 monooxygenase P450-3, a 13-hydroxylase, hydroxylates GA7 to GA3, the final product of the GA-biosynthetic pathway. In Gibberella fujikuroi (strain CBS 195.34 / IMI 58289 / NRRL A-6831) (Bakanae and foot rot disease fungus), this protein is Gibberellin cluster GA4 desaturase.